Here is a 1025-residue protein sequence, read N- to C-terminus: Leucyl-cystinyl aminopeptidase (1025 aa).

Position 1 is an N-acetylmethionine (M1). Topologically, residues 1 to 109 are cytoplasmic; it reads METFTNDRLQ…DGTCSVPSAR (109 aa). A Dileucine internalization motif motif is present at residues 53-54; the sequence is LL. Y70 is modified (phosphotyrosine). Positions 76–77 match the Dileucine internalization motif motif; that stretch reads LL. S80 and S91 each carry phosphoserine; by PKC/PRKCZ; in vitro. A tankyrase binding region spans residues 96–101; the sequence is RQSPDG. The chain crosses the membrane as a helical; Signal-anchor for type II membrane protein span at residues 110 to 131; it reads TLVICVFVIVVAVSVIMVIYLL. Residues 132 to 1025 lie on the Extracellular side of the membrane; it reads PRCTFTKEGC…RNLKTLTLWL (894 aa). N-linked (GlcNAc...) asparagine glycosylation is found at N145, N184, N215, N256, and N266. Residue E295 coordinates substrate. N-linked (GlcNAc...) asparagine glycosylation is found at N368 and N374. Position 428-432 (428-432) interacts with substrate; that stretch reads GAMEN. Residue N447 is glycosylated (N-linked (GlcNAc...) asparagine). H464 serves as a coordination point for Zn(2+). The Proton acceptor role is filled by E465. Zn(2+)-binding residues include H468 and E487. N-linked (GlcNAc...) asparagine glycosylation is found at N525, N578, N664, N682, N695, N758, N834, N850, and N989.

This sequence belongs to the peptidase M1 family. Homodimer. Binds tankyrases 1 and 2. Zn(2+) is required as a cofactor. N-glycosylated. In terms of tissue distribution, highly expressed in heart, brain, spleen, lung, kidney and white adipose tissue. Detected at lower levels in skeletal muscle and liver.

Its subcellular location is the cell membrane. It localises to the endomembrane system. The enzyme catalyses Release of an N-terminal amino acid, Cys-|-Xaa-, in which the half-cystine residue is involved in a disulfide loop, notably in oxytocin or vasopressin. Hydrolysis rates on a range of aminoacyl arylamides exceed that for the cystinyl derivative, however.. Functionally, release of an N-terminal amino acid, cleave before cysteine, leucine as well as other amino acids. Degrades peptide hormones such as oxytocin, vasopressin and angiotensin III, and plays a role in maintaining homeostasis during pregnancy. May be involved in the inactivation of neuronal peptides in the brain. Cleaves Met-enkephalin and dynorphin. Binds angiotensin IV and may be the angiotensin IV receptor in the brain. The polypeptide is Leucyl-cystinyl aminopeptidase (Lnpep) (Rattus norvegicus (Rat)).